The sequence spans 64 residues: Toxin Tce3 (64 aa).

One can recognise an LCN-type CS-alpha/beta domain in the interval 1 to 62; it reads KDGYIIEHRG…IFDSNNNKCS (62 aa). 4 cysteine pairs are disulfide-bonded: C11–C61, C15–C37, C23–C42, and C27–C44.

Belongs to the long (4 C-C) scorpion toxin superfamily. Sodium channel inhibitor family. Beta subfamily. In terms of tissue distribution, expressed by the venom gland.

It is found in the secreted. Its function is as follows. Inhibits the sodium (Nav) currents in an apparent irreversible manner. Produces small depolarization and induces repetitive firing in squid axons. Is specific for arthropods (crickets, triatomides, crabs and squids), but is non-toxic to mice. Shows antibacterial activity against both Gram-positive and Gram-negative bacteria. This chain is Toxin Tce3, found in Tityus cerroazul (Scorpion).